The chain runs to 154 residues: Prefoldin subunit 2 (154 aa).

Over residues 124 to 139 (IRLMGEDEKPAAKENS) the composition is skewed to basic and acidic residues. The disordered stretch occupies residues 124 to 154 (IRLMGEDEKPAAKENSEGAGAKASSAGVLVS). The segment covering 140–154 (EGAGAKASSAGVLVS) has biased composition (low complexity).

This sequence belongs to the prefoldin subunit beta family. Heterohexamer of two PFD-alpha type and four PFD-beta type subunits. Component of the PAQosome complex which is responsible for the biogenesis of several protein complexes and which consists of R2TP complex members RUVBL1, RUVBL2, RPAP3 and PIH1D1, URI complex members PFDN2, PFDN6, PDRG1, UXT and URI1 as well as ASDURF, POLR2E and DNAAF10/WDR92. Interacts with URI1; the interaction is phosphorylation-dependent and occurs in a growth-dependent manner.

It is found in the nucleus. It localises to the cytoplasm. The protein localises to the mitochondrion. Functionally, binds specifically to cytosolic chaperonin (c-CPN) and transfers target proteins to it. Binds to nascent polypeptide chain and promotes folding in an environment in which there are many competing pathways for nonnative proteins. The protein is Prefoldin subunit 2 (PFDN2) of Homo sapiens (Human).